The following is a 1584-amino-acid chain: Cilia- and flagella-associated protein 74 (1584 aa).

Positions 300–379 form a coiled coil; the sequence is RKFQAWDRAK…EAEEEKRKKQ (80 aa). The span at 692–706 shows a compositional bias: polar residues; the sequence is SEQQLEGTESSQADM. The tract at residues 692–739 is disordered; that stretch reads SEQQLEGTESSQADMQSRKELEKLDKEQEEEQPAEPERLTTVIPPSEE. A compositionally biased stretch (basic and acidic residues) spans 707–717; the sequence is QSRKELEKLDK.

The protein belongs to the CFAP74 family.

The protein resides in the cytoplasm. It localises to the cytoskeleton. The protein localises to the cilium axoneme. It is found in the flagellum axoneme. Functionally, as part of the central apparatus of the cilium axoneme may play a role in cilium movement. May play an important role in sperm architecture and function. This Homo sapiens (Human) protein is Cilia- and flagella-associated protein 74.